The following is a 962-amino-acid chain: Putative primase C962R (962 aa).

The region spanning 607 to 775 (ELDARLWIMF…PDPNNSYEKK (169 aa)) is the SF3 helicase domain. ATP is bound at residue 636-643 (GGGCNGKT).

Belongs to the asfivirus helicase C962R family.

The protein is Putative primase C962R of African swine fever virus (isolate Warthog/Namibia/Wart80/1980) (ASFV).